Consider the following 609-residue polypeptide: Proteasome-associated ATPase (609 aa).

The disordered stretch occupies residues 1-24; the sequence is MGESERSEAFGIPRDSPLSSGDAA. The stretch at 20–96 forms a coiled coil; the sequence is SGDAAELEQL…LREEVDRLGQ (77 aa). 296–301 is a binding site for ATP; that stretch reads GCGKTL. The interval 608-609 is docks into pockets in the proteasome alpha-ring; that stretch reads YL.

This sequence belongs to the AAA ATPase family. Homohexamer. Assembles into a hexameric ring structure that caps the 20S proteasome core. Strongly interacts with the prokaryotic ubiquitin-like protein Pup through a hydrophobic interface; the interacting region of ARC lies in its N-terminal coiled-coil domain. There is one Pup binding site per ARC hexamer ring. Upon ATP-binding, the C-terminus of ARC interacts with the alpha-rings of the proteasome core, possibly by binding to the intersubunit pockets.

Its pathway is protein degradation; proteasomal Pup-dependent pathway. Functionally, ATPase which is responsible for recognizing, binding, unfolding and translocation of pupylated proteins into the bacterial 20S proteasome core particle. May be essential for opening the gate of the 20S proteasome via an interaction with its C-terminus, thereby allowing substrate entry and access to the site of proteolysis. Thus, the C-termini of the proteasomal ATPase may function like a 'key in a lock' to induce gate opening and therefore regulate proteolysis. This Mycobacterium bovis (strain BCG / Pasteur 1173P2) protein is Proteasome-associated ATPase.